The chain runs to 573 residues: Dihydroxy-acid dehydratase (573 aa).

Residue C62 coordinates [2Fe-2S] cluster. D94 lines the Mg(2+) pocket. C135 is a [2Fe-2S] cluster binding site. Residues D136 and K137 each contribute to the Mg(2+) site. The residue at position 137 (K137) is an N6-carboxylysine. C212 provides a ligand contact to [2Fe-2S] cluster. E463 lines the Mg(2+) pocket. The active-site Proton acceptor is S489.

The protein belongs to the IlvD/Edd family. As to quaternary structure, homodimer. Requires [2Fe-2S] cluster as cofactor. Mg(2+) is required as a cofactor.

It catalyses the reaction (2R)-2,3-dihydroxy-3-methylbutanoate = 3-methyl-2-oxobutanoate + H2O. The catalysed reaction is (2R,3R)-2,3-dihydroxy-3-methylpentanoate = (S)-3-methyl-2-oxopentanoate + H2O. Its pathway is amino-acid biosynthesis; L-isoleucine biosynthesis; L-isoleucine from 2-oxobutanoate: step 3/4. It functions in the pathway amino-acid biosynthesis; L-valine biosynthesis; L-valine from pyruvate: step 3/4. Functionally, functions in the biosynthesis of branched-chain amino acids. Catalyzes the dehydration of (2R,3R)-2,3-dihydroxy-3-methylpentanoate (2,3-dihydroxy-3-methylvalerate) into 2-oxo-3-methylpentanoate (2-oxo-3-methylvalerate) and of (2R)-2,3-dihydroxy-3-methylbutanoate (2,3-dihydroxyisovalerate) into 2-oxo-3-methylbutanoate (2-oxoisovalerate), the penultimate precursor to L-isoleucine and L-valine, respectively. In Arthrobacter sp. (strain FB24), this protein is Dihydroxy-acid dehydratase.